Consider the following 62-residue polypeptide: Amolopin-P2 (62 aa).

The N-terminal stretch at 1 to 22 (MFTLKKSLLLLFFLGTISLSLC) is a signal peptide. The propeptide occupies 23–44 (EQERGADEEENGGEVTEQEVKR).

It belongs to the frog skin active peptide (FSAP) family. Amolopin subfamily. As to expression, expressed by the skin glands.

It localises to the secreted. Antimicrobial peptide with activity against Gram-positive bacteria. Has been tested against S.aureus (MIC=37.5 ug/mL), against B.pumilus (MIC=75.0 ug/mL), B.cereus (no activity detected). Does not show activity against Gram-negative bacteria (E.coli, B.dysenteriae, A.calcoaceticus, P.aeruginosa) and fungi (C.albicans). Does not show hemolytic activity against rabbit erythrocytes. This Amolops loloensis (Lolokou Sucker Frog) protein is Amolopin-P2.